A 372-amino-acid polypeptide reads, in one-letter code: GDP-mannose transporter GONST3 (372 aa).

10 consecutive transmembrane segments (helical) span residues 33-53, 60-80, 92-112, 125-145, 155-175, 177-197, 209-229, 251-271, 280-300, and 303-323; these read ASVY…SIIN, FPYP…GVLL, LNLL…LSLF, TFIV…TLFL, WGSL…DYQF, IAAY…FVYI, WGLV…ELLI, VVLP…FGFS, GFTV…LMVW, and HSTF…VMYQ. Residues 331-372 form a disordered region; sequence NATQEAKPQEQDEEQEKLLEMQENKESNSVDIKETLKSEEKL. Residues 346–372 are compositionally biased toward basic and acidic residues; the sequence is EKLLEMQENKESNSVDIKETLKSEEKL.

Belongs to the nucleotide-sugar transporter family. GDP-Mannose:GMP antiporter (GMA) (TC 2.A.7.13) subfamily. Expressed in rosette leaves, stems, flowers and siliques.

It is found in the golgi apparatus membrane. Functionally, GDP-mannose transporter that may be involved in the import of GDP-mannose from the cytoplasm into the Golgi lumen. The polypeptide is GDP-mannose transporter GONST3 (Arabidopsis thaliana (Mouse-ear cress)).